Consider the following 392-residue polypeptide: ATP phosphoribosyltransferase regulatory subunit (392 aa).

It belongs to the class-II aminoacyl-tRNA synthetase family. HisZ subfamily. Heteromultimer composed of HisG and HisZ subunits.

It localises to the cytoplasm. It participates in amino-acid biosynthesis; L-histidine biosynthesis; L-histidine from 5-phospho-alpha-D-ribose 1-diphosphate: step 1/9. Functionally, required for the first step of histidine biosynthesis. May allow the feedback regulation of ATP phosphoribosyltransferase activity by histidine. In Geobacillus sp. (strain WCH70), this protein is ATP phosphoribosyltransferase regulatory subunit.